The primary structure comprises 561 residues: Sesquiterpene synthase 2 (561 aa).

The Mg(2+) site is built by D313, D317, D458, and E466. The DDXXD motif signature appears at D313–D317.

The protein belongs to the terpene synthase family. Tpsa subfamily. Mn(2+) serves as cofactor. It depends on Mg(2+) as a cofactor.

It is found in the cytoplasm. The enzyme catalyses (2E,6E)-farnesyl diphosphate + H2O = kunzeaol + diphosphate. It functions in the pathway secondary metabolite biosynthesis; terpenoid biosynthesis. In terms of biological role, involved in the biosynthesis of kunzeaol. Produces mainly (-)-germacrene D along with gamma-cadinene. The protein is Sesquiterpene synthase 2 (STS2) of Thapsia garganica (Deadly carrot).